Consider the following 138-residue polypeptide: Protein Turandot B (138 aa).

Residues 1-21 (MNFKTSLICFALLLIGTLCSA) form the signal peptide.

The protein belongs to the Turandot family.

It is found in the secreted. In terms of biological role, a humoral factor that may play a role in stress tolerance. The protein is Protein Turandot B of Drosophila melanogaster (Fruit fly).